Here is a 371-residue protein sequence, read N- to C-terminus: MASYHLSVKTGGKGSASPHADYIAREGKYAREKDSDLEHKESGNMPAWAAHKPSEFWKAADTSERANGCTYREIEIALPRELKPEQRLELVRDFVQQEIGDRHAYQFAIHNPKAAIAGGEQPHAHIMFSERINDGIHRDPEQYFKRANTKEPDAVAQKRHVSGKHRPNAKNTLLPRGRRWADLQNKHLERYQHADRVDSRSLKAQGIDREPERHLGAGQVQRFDTEQLQAILERREAERQVQQSRDERDSVIDVTTSLREALSERDTLTLKQELKSEPEQESHSGRTFDFEKEPDKLNALVSDAMKDIQEEIDLQSLVNDAMAEFQGIHQEMERQRERERLAEKQRQQEKERQRLAEQIRQKPDKGWSFSR.

5 disordered regions span residues 1–46 (MASY…GNMP), 150–172 (KEPDAVAQKRHVSGKHRPNAKNT), 196–221 (RVDSRSLKAQGIDREPERHLGAGQVQ), 263–291 (SERDTLTLKQELKSEPEQESHSGRTFDFE), and 328–371 (IHQE…SFSR). Residues 22 to 42 (YIAREGKYAREKDSDLEHKES) show a composition bias toward basic and acidic residues. Residues 157–168 (QKRHVSGKHRPN) are compositionally biased toward basic residues. A compositionally biased stretch (basic and acidic residues) spans 196–215 (RVDSRSLKAQGIDREPERHL). Positions 330–365 (QEMERQRERERLAEKQRQQEKERQRLAEQIRQKPDK) are enriched in basic and acidic residues.

It belongs to the MobA/MobL family.

Its function is as follows. This protein is probably required for relaxation complex formation. This is 43 kDa relaxation protein from Salmonella typhimurium.